The chain runs to 466 residues: GVGFKAGVKDYKLTYYTPDYETLATDILAAFRVXPQPGVPPEEAGAAVAAESSTGTWTTVWTDGLTSLDRYKGRCYHIEPVAGEESQFIAYVAYPLDLFEEGSVTNMFTSIVGNVFGFKALRALRLEDLRIPPAYSKTFQGPPHGIQVERDKLNKYGRPLLGCTIKPKLGLLAKNYGRADYECIRGGLDFTKDDENVNSQPFMRWRDRFLFCAEAIYKAQAETGEIKGHYLNATAGTCEEMIKRAVFARELGVPIVMHDYLTGGFTANTSLAHYCRDNGLLLHIHRAMHAVIDRQKNHGIHFRVLAKALRMSGGDHIHAGTVVGKLEGEREITLGFVDLLRDDFIEKDRSRGIYFTQDWVSLPGVLPVASGGIHVWHMPALTEIFGDDSVLQFGGGTLGHPWXNAPGAVANRVALEACVQARNEGRDLAREGNEVIREASKWSPELAAACEIWKEIIFEFEAMDAL.

K5 is modified (N6,N6,N6-trimethyllysine). The substrate site is built by N114 and T164. The active-site Proton acceptor is the K166. K168 contributes to the substrate binding site. Residues K192, D194, and E195 each coordinate Mg(2+). K192 carries the N6-carboxylysine modification. The active-site Proton acceptor is the H285. R286, H318, and S370 together coordinate substrate.

It belongs to the RuBisCO large chain family. Type I subfamily. Heterohexadecamer of 8 large chains and 8 small chains; disulfide-linked. The disulfide link is formed within the large subunit homodimers. The cofactor is Mg(2+). The disulfide bond which can form in the large chain dimeric partners within the hexadecamer appears to be associated with oxidative stress and protein turnover.

It is found in the plastid. The protein resides in the chloroplast. It catalyses the reaction 2 (2R)-3-phosphoglycerate + 2 H(+) = D-ribulose 1,5-bisphosphate + CO2 + H2O. It carries out the reaction D-ribulose 1,5-bisphosphate + O2 = 2-phosphoglycolate + (2R)-3-phosphoglycerate + 2 H(+). In terms of biological role, ruBisCO catalyzes two reactions: the carboxylation of D-ribulose 1,5-bisphosphate, the primary event in carbon dioxide fixation, as well as the oxidative fragmentation of the pentose substrate in the photorespiration process. Both reactions occur simultaneously and in competition at the same active site. This Asarum canadense (Wild ginger) protein is Ribulose bisphosphate carboxylase large chain.